The following is a 404-amino-acid chain: Glucose-1-phosphate adenylyltransferase (404 aa).

Alpha-D-glucose 1-phosphate contacts are provided by residues Tyr99, Gly164, 179-180, and Ser197; that span reads EK.

Belongs to the bacterial/plant glucose-1-phosphate adenylyltransferase family.

The enzyme catalyses alpha-D-glucose 1-phosphate + ATP + H(+) = ADP-alpha-D-glucose + diphosphate. Its pathway is capsule biogenesis; capsule polysaccharide biosynthesis. It functions in the pathway glycan biosynthesis; glycogen biosynthesis. Its function is as follows. Involved in the biosynthesis of ADP-glucose, a building block, required in the biosynthesis of maltose-1-phosphate (M1P) and in the elongation reactions to produce linear alpha-1,4-glucans. Catalyzes the reaction between ATP and alpha-D-glucose 1-phosphate (G1P) to produce pyrophosphate and ADP-Glc. The polypeptide is Glucose-1-phosphate adenylyltransferase (Mycobacteroides abscessus (strain ATCC 19977 / DSM 44196 / CCUG 20993 / CIP 104536 / JCM 13569 / NCTC 13031 / TMC 1543 / L948) (Mycobacterium abscessus)).